Consider the following 434-residue polypeptide: Enolase (434 aa).

Gln-167 provides a ligand contact to (2R)-2-phosphoglycerate. Catalysis depends on Glu-209, which acts as the Proton donor. Mg(2+) is bound by residues Asp-246, Glu-291, and Asp-318. Residues Lys-343, Arg-372, Ser-373, and Lys-394 each coordinate (2R)-2-phosphoglycerate. The active-site Proton acceptor is Lys-343.

The protein belongs to the enolase family. As to quaternary structure, component of the RNA degradosome, a multiprotein complex involved in RNA processing and mRNA degradation. Mg(2+) is required as a cofactor.

Its subcellular location is the cytoplasm. The protein localises to the secreted. It localises to the cell surface. The catalysed reaction is (2R)-2-phosphoglycerate = phosphoenolpyruvate + H2O. It participates in carbohydrate degradation; glycolysis; pyruvate from D-glyceraldehyde 3-phosphate: step 4/5. Functionally, catalyzes the reversible conversion of 2-phosphoglycerate (2-PG) into phosphoenolpyruvate (PEP). It is essential for the degradation of carbohydrates via glycolysis. In Buchnera aphidicola subsp. Acyrthosiphon pisum (strain 5A), this protein is Enolase.